We begin with the raw amino-acid sequence, 129 residues long: Large ribosomal subunit protein bL12 (129 aa).

The segment covering 95–123 has biased composition (basic and acidic residues); it reads MVESTPKSIKEGVSKEDAEEAKKSLEDAG. The segment at 95–129 is disordered; it reads MVESTPKSIKEGVSKEDAEEAKKSLEDAGGKASLK.

The protein belongs to the bacterial ribosomal protein bL12 family. As to quaternary structure, homodimer. Part of the ribosomal stalk of the 50S ribosomal subunit. Forms a multimeric L10(L12)X complex, where L10 forms an elongated spine to which 2 to 4 L12 dimers bind in a sequential fashion. Binds GTP-bound translation factors.

In terms of biological role, forms part of the ribosomal stalk which helps the ribosome interact with GTP-bound translation factors. Is thus essential for accurate translation. This chain is Large ribosomal subunit protein bL12, found in Acaryochloris marina (strain MBIC 11017).